We begin with the raw amino-acid sequence, 306 residues long: Mitochondrial basic amino acids transporter (306 aa).

6 consecutive transmembrane segments (helical) span residues 2-22 (ALDFLAGCAGGVAGVIVGHPF), 61-81 (GLGSPLMGLTFINALVFGVQG), 96-116 (FLAGAAAGAIQCVICCPMELA), 153-172 (GMVSTLLRETPSFGVYFLTY), 187-207 (LLVPKLLLAGGTSGITSWLST), and 255-275 (LLRAFPVNAATFATVTVVLTY). Solcar repeat units lie at residues 2 to 86 (ALDF…TLRA), 90 to 178 (DSPL…LTRA), and 190 to 275 (PKLL…VLTY). Residues 283–306 (VDSEAAPGASTTPAGPALAQPSSL) are disordered. Low complexity predominate over residues 287–306 (AAPGASTTPAGPALAQPSSL).

This sequence belongs to the mitochondrial carrier (TC 2.A.29) family.

It is found in the mitochondrion inner membrane. The catalysed reaction is L-lysine(out) + L-arginine(in) = L-lysine(in) + L-arginine(out). The enzyme catalyses L-histidine(out) + L-arginine(in) = L-histidine(in) + L-arginine(out). It carries out the reaction L-ornithine(in) + L-arginine(out) = L-ornithine(out) + L-arginine(in). It catalyses the reaction L-homoarginine(in) + L-arginine(out) = L-homoarginine(out) + L-arginine(in). The catalysed reaction is N(omega)-methyl-L-arginine(in) + L-arginine(out) = N(omega)-methyl-L-arginine(out) + L-arginine(in). The enzyme catalyses L-arginine(in) = L-arginine(out). It carries out the reaction L-lysine(in) = L-lysine(out). It catalyses the reaction L-ornithine(in) = L-ornithine(out). The catalysed reaction is L-histidine(out) = L-histidine(in). Its function is as follows. Mitochondrial transporter of arginine, lysine, homoarginine, methylarginine and, to a much lesser extent, ornithine and histidine. Does not transport carnitine nor acylcarnitines. Functions by both counter-exchange and uniport mechanisms. Plays a physiological role in the import of basic amino acids into mitochondria for mitochondrial protein synthesis and amino acid degradation. The sequence is that of Mitochondrial basic amino acids transporter (Slc25a29) from Rattus norvegicus (Rat).